Reading from the N-terminus, the 460-residue chain is Inactive ubiquitin carboxyl-terminal hydrolase MINDY-4B (460 aa).

Positions 41–76 (TNNSTPQNHEGNHTSADENEDGTGLSQPKGQGHLPS) are disordered.

Belongs to the MINDY deubiquitinase family. FAM188 subfamily.

This chain is Inactive ubiquitin carboxyl-terminal hydrolase MINDY-4B, found in Homo sapiens (Human).